The sequence spans 150 residues: Deoxyuridine 5'-triphosphate nucleotidohydrolase (150 aa).

Substrate contacts are provided by residues 69–71, Asn82, 86–88, and Lys96; these read RSG and TID.

It belongs to the dUTPase family. It depends on Mg(2+) as a cofactor.

The catalysed reaction is dUTP + H2O = dUMP + diphosphate + H(+). The protein operates within pyrimidine metabolism; dUMP biosynthesis; dUMP from dCTP (dUTP route): step 2/2. Its function is as follows. This enzyme is involved in nucleotide metabolism: it produces dUMP, the immediate precursor of thymidine nucleotides and it decreases the intracellular concentration of dUTP so that uracil cannot be incorporated into DNA. The chain is Deoxyuridine 5'-triphosphate nucleotidohydrolase from Aquifex aeolicus (strain VF5).